We begin with the raw amino-acid sequence, 315 residues long: Methionyl-tRNA formyltransferase (315 aa).

109-112 (SLLP) contacts (6S)-5,6,7,8-tetrahydrofolate.

The protein belongs to the Fmt family.

The catalysed reaction is L-methionyl-tRNA(fMet) + (6R)-10-formyltetrahydrofolate = N-formyl-L-methionyl-tRNA(fMet) + (6S)-5,6,7,8-tetrahydrofolate + H(+). In terms of biological role, attaches a formyl group to the free amino group of methionyl-tRNA(fMet). The formyl group appears to play a dual role in the initiator identity of N-formylmethionyl-tRNA by promoting its recognition by IF2 and preventing the misappropriation of this tRNA by the elongation apparatus. This Lachnospira eligens (strain ATCC 27750 / DSM 3376 / VPI C15-48 / C15-B4) (Eubacterium eligens) protein is Methionyl-tRNA formyltransferase.